A 506-amino-acid polypeptide reads, in one-letter code: Probable Xaa-Pro aminopeptidase PADG_06815 (506 aa).

Residues aspartate 285, aspartate 296, glutamate 433, and glutamate 471 each coordinate Mn(2+).

This sequence belongs to the peptidase M24B family. The cofactor is Mn(2+).

The catalysed reaction is Release of any N-terminal amino acid, including proline, that is linked to proline, even from a dipeptide or tripeptide.. Catalyzes the removal of a penultimate prolyl residue from the N-termini of peptides. The protein is Probable Xaa-Pro aminopeptidase PADG_06815 of Paracoccidioides brasiliensis (strain Pb18).